The following is a 108-amino-acid chain: MTNSQSDAALAAVLDRFDPSAGGPGAYDTPLGITNPPIDELLDRVSSKYALVIYAAKRARQINDYYNQLGEGILEYVGPLVEPGLQEKPLSIALREIHGDLLEHTEGE.

This sequence belongs to the RNA polymerase subunit omega family. In terms of assembly, the RNAP catalytic core consists of 2 alpha, 1 beta, 1 beta' and 1 omega subunit. When a sigma factor is associated with the core the holoenzyme is formed, which can initiate transcription.

The enzyme catalyses RNA(n) + a ribonucleoside 5'-triphosphate = RNA(n+1) + diphosphate. Promotes RNA polymerase assembly. Latches the N- and C-terminal regions of the beta' subunit thereby facilitating its interaction with the beta and alpha subunits. This is DNA-directed RNA polymerase subunit omega from Mycolicibacterium paratuberculosis (strain ATCC BAA-968 / K-10) (Mycobacterium paratuberculosis).